A 353-amino-acid polypeptide reads, in one-letter code: Protein pelota homolog (353 aa).

It belongs to the eukaryotic release factor 1 family. Pelota subfamily. As to quaternary structure, monomer. It depends on a divalent metal cation as a cofactor.

It is found in the cytoplasm. In terms of biological role, may function in recognizing stalled ribosomes, interact with stem-loop structures in stalled mRNA molecules, and effect endonucleolytic cleavage of the mRNA. May play a role in the release non-functional ribosomes and degradation of damaged mRNAs. Has endoribonuclease activity. In Methanobrevibacter smithii (strain ATCC 35061 / DSM 861 / OCM 144 / PS), this protein is Protein pelota homolog.